The chain runs to 515 residues: Bifunctional purine biosynthesis protein PurH (515 aa).

The MGS-like domain occupies M1 to V145.

This sequence belongs to the PurH family.

It carries out the reaction (6R)-10-formyltetrahydrofolate + 5-amino-1-(5-phospho-beta-D-ribosyl)imidazole-4-carboxamide = 5-formamido-1-(5-phospho-D-ribosyl)imidazole-4-carboxamide + (6S)-5,6,7,8-tetrahydrofolate. It catalyses the reaction IMP + H2O = 5-formamido-1-(5-phospho-D-ribosyl)imidazole-4-carboxamide. The protein operates within purine metabolism; IMP biosynthesis via de novo pathway; 5-formamido-1-(5-phospho-D-ribosyl)imidazole-4-carboxamide from 5-amino-1-(5-phospho-D-ribosyl)imidazole-4-carboxamide (10-formyl THF route): step 1/1. It participates in purine metabolism; IMP biosynthesis via de novo pathway; IMP from 5-formamido-1-(5-phospho-D-ribosyl)imidazole-4-carboxamide: step 1/1. This Streptococcus pyogenes serotype M12 (strain MGAS2096) protein is Bifunctional purine biosynthesis protein PurH.